The following is a 1400-amino-acid chain: DNA-directed RNA polymerase subunit beta' (1400 aa).

Cysteine 71, cysteine 73, cysteine 86, and cysteine 89 together coordinate Zn(2+). Residues aspartate 462, aspartate 464, and aspartate 466 each contribute to the Mg(2+) site. Zn(2+)-binding residues include cysteine 811, cysteine 885, cysteine 892, and cysteine 895.

This sequence belongs to the RNA polymerase beta' chain family. As to quaternary structure, the RNAP catalytic core consists of 2 alpha, 1 beta, 1 beta' and 1 omega subunit. When a sigma factor is associated with the core the holoenzyme is formed, which can initiate transcription. The cofactor is Mg(2+). Zn(2+) serves as cofactor.

The enzyme catalyses RNA(n) + a ribonucleoside 5'-triphosphate = RNA(n+1) + diphosphate. Functionally, DNA-dependent RNA polymerase catalyzes the transcription of DNA into RNA using the four ribonucleoside triphosphates as substrates. In Brucella suis biovar 1 (strain 1330), this protein is DNA-directed RNA polymerase subunit beta'.